The primary structure comprises 513 residues: Na(+)/H(+) antiporter NhaB (513 aa).

The next 12 helical transmembrane spans lie at 23 to 43 (LALI…PFVA), 52 to 72 (IFTL…LLAI), 97 to 117 (LLLM…LFIF), 120 to 140 (LLLS…AAAF), 144 to 164 (FLDA…FYGI), 202 to 222 (LMMH…VGEP), 238 to 258 (FFLR…LTCL), 303 to 323 (AIIG…VGLI), 348 to 368 (TESL…AVII), 391 to 411 (LFYI…VGTI), 447 to 467 (ATPN…APLI), and 475 to 495 (VWMA…CVEF).

Belongs to the NhaB Na(+)/H(+) (TC 2.A.34) antiporter family.

The protein resides in the cell inner membrane. It catalyses the reaction 2 Na(+)(in) + 3 H(+)(out) = 2 Na(+)(out) + 3 H(+)(in). Functionally, na(+)/H(+) antiporter that extrudes sodium in exchange for external protons. In Shigella boydii serotype 18 (strain CDC 3083-94 / BS512), this protein is Na(+)/H(+) antiporter NhaB.